The following is a 472-amino-acid chain: Ribosomal protein uS12 methylthiotransferase RimO (472 aa).

The MTTase N-terminal domain maps to methionine 1 to arginine 114. 6 residues coordinate [4Fe-4S] cluster: cysteine 10, cysteine 46, cysteine 78, cysteine 171, cysteine 175, and cysteine 178. One can recognise a Radical SAM core domain in the interval arginine 157–glutamine 388. The TRAM domain occupies arginine 391–glutamate 460.

The protein belongs to the methylthiotransferase family. RimO subfamily. [4Fe-4S] cluster serves as cofactor.

The protein resides in the cytoplasm. It catalyses the reaction L-aspartate(89)-[ribosomal protein uS12]-hydrogen + (sulfur carrier)-SH + AH2 + 2 S-adenosyl-L-methionine = 3-methylsulfanyl-L-aspartate(89)-[ribosomal protein uS12]-hydrogen + (sulfur carrier)-H + 5'-deoxyadenosine + L-methionine + A + S-adenosyl-L-homocysteine + 2 H(+). Functionally, catalyzes the methylthiolation of an aspartic acid residue of ribosomal protein uS12. This is Ribosomal protein uS12 methylthiotransferase RimO from Roseiflexus sp. (strain RS-1).